The following is a 784-amino-acid chain: Toll-like receptor 2 (784 aa).

A signal peptide spans 1–20 (MPRALWTAWVWAVIILSTEG). Residues 21 to 587 (ASDQASSLSC…ARLSLSECHR (567 aa)) are Extracellular-facing. Cysteines 30 and 36 form a disulfide. LRR repeat units lie at residues 54–77 (VKSLDLSNNEITYVSNRDLQRCVN), 78–101 (LKTLRLGANEIHTVEEDSFFHLRN), 102–125 (LEYLDLSYNRLSNLSSSWFRSLYV), 126–150 (LKFLNLLGNLYKTLGETSLFSHLPN), 151–175 (LRTLKVGNSNSFTEIHEKDFTGLTF), 176–199 (LEELEISAQNLQIYVPKSLKSIQN), 200–223 (ISHLILHLKQPVLLVDILVDIVSS), 224–250 (LDCLELRDTNLHTFHFSEASISEMSTS), 251–278 (VKKLIFRNVQFTDESFVEVVKLFNYVSG), 279–308 (ILEVEFDDCTHDGIGDFRALSLDRIRHLGN), 309–337 (VETLTIRKLHIPQFFLFQDLSSIYPLTGK), 338–361 (VKRVTIENSKVFLVPCLLSQHLKS), 362–388 (LEYLDLSENLMSEETLKNSACKDAWPF), 389–414 (LQTLVLRQNRLKSLEKXGELLLTLEN), 415–437 (LNSLDISKNNFLSMPETCQWPGK), 438–457 (MKQLNLSSTRIHSLTQCLPQ), 458–478 (TLEILDVSNNNLDSFSLILPQ), 479–500 (LKELYISRNKLKTLPDASFLPV), and 501–524 (LXVMRISRNIINTFSKEQLDSFQQ). N-linked (GlcNAc...) asparagine glycosylation is present at Asn114. Asn199 carries N-linked (GlcNAc...) asparagine glycosylation. An intrachain disulfide couples Cys353 to Cys382. A disulfide bridge links Cys432 with Cys454. A glycan (N-linked (GlcNAc...) asparagine) is linked at Asn442. One can recognise an LRRCT domain in the interval 525–579 (LKTLEAGGNNFICSCDFLSFTQGQQALGRVLVDWPDDYHCDSPSHVRGQRVQDAR). The helical transmembrane segment at 588–608 (AAVVSAACCALFLLLLLMGVL) threads the bilayer. Residues 609–784 (CHRFHGLWYM…WLNLRAAIRS (176 aa)) lie on the Cytoplasmic side of the membrane. The TIR domain occupies 639–782 (ICYDAFVSYS…GFWLNLRAAI (144 aa)). Residue Lys754 forms a Glycyl lysine isopeptide (Lys-Gly) (interchain with G-Cter in ubiquitin) linkage. The short motif at 761–778 (YLEWPVDETQQEGFWLNL) is the ATG16L1-binding motif element.

The protein belongs to the Toll-like receptor family. As to quaternary structure, interacts with LY96, TLR1 and TLR6 (via extracellular domain). TLR2 seems to exist in heterodimers with either TLR1 or TLR6 before stimulation by the ligand. The heterodimers form bigger oligomers in response to their corresponding ligands as well as further heterotypic associations with other receptors such as CD14 and/or CD36. Binds MYD88 (via TIR domain). Interacts with TICAM1. Interacts with CNPY3. Interacts with ATG16L1. Interacts with PPP1R11. Interacts with TICAM2. Interacts with TIRAP. Post-translationally, ubiquitinated at Lys-754 by PPP1R11, leading to its degradation. Deubiquitinated by USP2. In terms of processing, glycosylation of Asn-442 is critical for secretion of the N-terminal ectodomain of TLR2.

It is found in the membrane. It localises to the cytoplasmic vesicle. The protein resides in the phagosome membrane. The protein localises to the membrane raft. Cooperates with LY96 to mediate the innate immune response to bacterial lipoproteins and other microbial cell wall components. Cooperates with TLR1 or TLR6 to mediate the innate immune response to bacterial lipoproteins or lipopeptides. Acts via MYD88 and TRAF6, leading to NF-kappa-B activation, cytokine secretion and the inflammatory response. May also promote apoptosis in response to lipoproteins. Forms activation clusters composed of several receptors depending on the ligand, these clusters trigger signaling from the cell surface and subsequently are targeted to the Golgi in a lipid-raft dependent pathway. Forms the cluster TLR2:TLR6:CD14:CD36 in response to diacylated lipopeptides and TLR2:TLR1:CD14 in response to triacylated lipopeptides. The sequence is that of Toll-like receptor 2 (TLR2) from Bos indicus (Zebu).